The primary structure comprises 330 residues: tRNA U34 carboxymethyltransferase (330 aa).

Carboxy-S-adenosyl-L-methionine is bound by residues Lys91, Trp105, Lys110, Gly130, 152–154 (DPS), 181–182 (IE), Met196, Tyr200, and Arg315.

The protein belongs to the class I-like SAM-binding methyltransferase superfamily. CmoB family. Homotetramer.

It catalyses the reaction carboxy-S-adenosyl-L-methionine + 5-hydroxyuridine(34) in tRNA = 5-carboxymethoxyuridine(34) in tRNA + S-adenosyl-L-homocysteine + H(+). In terms of biological role, catalyzes carboxymethyl transfer from carboxy-S-adenosyl-L-methionine (Cx-SAM) to 5-hydroxyuridine (ho5U) to form 5-carboxymethoxyuridine (cmo5U) at position 34 in tRNAs. In Shewanella sediminis (strain HAW-EB3), this protein is tRNA U34 carboxymethyltransferase.